Reading from the N-terminus, the 125-residue chain is Oxytocin-neurophysin 1 (125 aa).

The N-terminal stretch at 1–19 (MAGPSLACCLLGLLALTSA) is a signal peptide. A disulfide bond links Cys-20 and Cys-25. Glycine amide is present on Gly-28. 7 disulfides stabilise this stretch: Cys-41–Cys-85, Cys-44–Cys-58, Cys-52–Cys-75, Cys-59–Cys-65, Cys-92–Cys-104, Cys-98–Cys-116, and Cys-105–Cys-110.

Belongs to the vasopressin/oxytocin family. As to quaternary structure, interacts with oxytocin receptor (Ki=1.5 nM). Interacts with vasopressin V1aR/AVPR1A (Ki=37 nM), V1bR/AVPR1B (Ki=222 nM) and V2R/AVPR2 receptors (Ki=823 nM).

The protein resides in the secreted. Functionally, neurophysin 1 specifically binds oxytocin. In terms of biological role, oxytocin causes contraction of the smooth muscle of the uterus and of the mammary gland. Acts by binding to oxytocin receptor (OXTR). The protein is Oxytocin-neurophysin 1 (OXT) of Homo sapiens (Human).